The following is a 161-amino-acid chain: Nucleotide-binding protein Dtpsy_2240 (161 aa).

It belongs to the YajQ family.

Its function is as follows. Nucleotide-binding protein. The protein is Nucleotide-binding protein Dtpsy_2240 of Acidovorax ebreus (strain TPSY) (Diaphorobacter sp. (strain TPSY)).